The following is a 125-amino-acid chain: Ixonnexin (125 aa).

The N-terminal stretch at 1-21 (MGLTGTTLVLVCVAFFGSAAA) is a signal peptide. N-linked (GlcNAc...) asparagine glycosylation is present at Asn26. The segment at 81–125 (TSSGGPDDTGDNTPPPTEKPKQKKKKPKKTKKPKRKSKKDQKENF) is disordered. Residues 101-119 (KQKKKKPKKTKKPKRKSKK) show a composition bias toward basic residues.

The protein belongs to the salp14 family. In terms of assembly, homodimer. Interacts with host PLG. Interacts with host PLAT. As to expression, saliva (at protein level).

The protein resides in the secreted. Its function is as follows. Salivary protein that promotes host fibrinolysis via accelerating host plasmin generation from plasminogen (PLG) initiated by tPA/tissue-type plasminogen activator (PLAT). Does not affect urokinase (PLAU)-mediated fibrinolysis in the host. Enhances amidolytic activity of host coagulation factor Xa (F10). The chain is Ixonnexin from Ixodes scapularis (Black-legged tick).